The chain runs to 227 residues: Esterase OVCA2 (227 aa).

Residues Ser119, Asp179, and His206 each act as charge relay system in the active site.

This sequence belongs to the LovG family.

The enzyme catalyses a carboxylic ester + H2O = an alcohol + a carboxylate + H(+). Functionally, exhibits ester hydrolase activity with a strong preference for long-chain alkyl ester substrates and high selectivity against a variety of short, branched, and substituted esters. Is able to hydrolyze ester bonds within a wide range of p-nitrophenyl derivatives (C2-C14) in vitro, with a strong preference toward substrates of &gt;8 carbons. This Bos taurus (Bovine) protein is Esterase OVCA2 (OVCA2).